Reading from the N-terminus, the 641-residue chain is Epithelial sodium channel subunit beta (641 aa).

Residues M1–A50 lie on the Cytoplasmic side of the membrane. A helical membrane pass occupies residues M51–I71. The Extracellular segment spans residues R72–G533. Disulfide bonds link C98–C273, C185–C190, C197–C204, C250–C257, C362–C449, C387–C445, C391–C441, C400–C427, and C402–C416. N141 is a glycosylation site (N-linked (GlcNAc...) asparagine). N261 is a glycosylation site (N-linked (GlcNAc...) asparagine). Residues S534–I554 traverse the membrane as a helical segment. Over K555–I641 the chain is Cytoplasmic. The interval P593 to L624 is disordered. The PY motif; recruits WW domain-containing proteins and is thereby required for ubiquitination and inhibition of the channel by NEDD4 and NEDD4L signature appears at P617–Y621. Phosphoserine is present on residues S634 and S636.

This sequence belongs to the amiloride-sensitive sodium channel (TC 1.A.6) family. SCNN1B subfamily. As to quaternary structure, component of the heterotrimeric epithelial sodium channel (ENaC) composed of an alpha/SCNN1A, a beta/SCNN1B and a gamma/SCNN1G subunit. An additional delta/SCNN1D subunit can replace the alpha/SCNN1A subunit to form an alternative channel with specific properties. Interacts with WWP1 (via WW domains). Interacts with WWP2 (via WW domains); inhibits the channel. Interacts with the full-length immature form of PCSK9 (pro-PCSK9). Interacts (N-glycosylated) with BPIFA1; the interaction is direct and inhibits the proteolytic processing of SCNN1A and SCNN1G and the activation of ENaC. Ubiquitinated. Can be ubiquitinated at multiple sites and undergo monoubiquitination and polyubiquitination. Ubiquitination by NEDD4 or NEDD4L inhibits the ENaC channel through endocytosis, intracellular retention and degradation of its individual subunits. However, some studies could not confirm the ubiquitination of this subunit of the ENaC. Post-translationally, phosphorylated on serine and threonine residues. Aldosterone and insulin increase the basal level of phosphorylation. In terms of processing, N-glycosylated. N-glycosylation is required for interaction with BPIFA1.

It localises to the apical cell membrane. It is found in the cytoplasmic vesicle membrane. The enzyme catalyses Na(+)(in) = Na(+)(out). Its activity is regulated as follows. Originally identified and characterized by its inhibition by the diuretic drug amiloride. In terms of biological role, this is one of the three pore-forming subunits of the heterotrimeric epithelial sodium channel (ENaC), a critical regulator of sodium balance and fluid homeostasis. ENaC operates in epithelial tissues, where it mediates the electrodiffusion of sodium ions from extracellular fluid through the apical membrane of cells, with water following osmotically. It plays a key role in maintaining sodium homeostasis through electrogenic sodium reabsorption in the kidneys. Additionally, ENaC is essential for airway surface liquid homeostasis, which is crucial for proper mucus clearance. This Canis lupus familiaris (Dog) protein is Epithelial sodium channel subunit beta.